The sequence spans 155 residues: MDQAKLARMQQSVRIGGKGTPRRKVKKVHKSSGADDKKLQATLKKMNVQPIQAIEEVNMFKEDGNVIHFGAPKVHASVPSNTFALYGNGEEKELTELVPGILNQLGPDSLASLRKLAESYQNMQKNQAGADGKKDDEEDDIPDLVEGENFESNVE.

Disordered stretches follow at residues 1 to 35 (MDQA…SGAD) and 116 to 155 (LAES…SNVE). The segment covering 20 to 30 (TPRRKVKKVHK) has biased composition (basic residues). Residues 33–98 (GADDKKLQAT…GEEKELTELV (66 aa)) form the NAC-A/B domain. A compositionally biased stretch (acidic residues) spans 136 to 155 (DEEDDIPDLVEGENFESNVE).

The protein belongs to the NAC-beta family. In terms of assembly, part of the nascent polypeptide-associated complex (NAC), consisting of egd2 and egd1. NAC associates with ribosomes via egd1.

Its subcellular location is the cytoplasm. It localises to the nucleus. Functionally, component of the nascent polypeptide-associated complex (NAC), a dynamic component of the ribosomal exit tunnel, protecting the emerging polypeptides from interaction with other cytoplasmic proteins to ensure appropriate nascent protein targeting. The NAC complex also promotes mitochondrial protein import by enhancing productive ribosome interactions with the outer mitochondrial membrane and blocks the inappropriate interaction of ribosomes translating non-secretory nascent polypeptides with translocation sites in the membrane of the endoplasmic reticulum. EGD1 may act as a transcription factor that exert a negative effect on the expression of several genes that are transcribed by RNA polymerase II. This is Nascent polypeptide-associated complex subunit beta (egd1) from Aspergillus niger (strain ATCC MYA-4892 / CBS 513.88 / FGSC A1513).